The sequence spans 376 residues: Chaperone protein DnaJ (376 aa).

The region spanning 5–70 is the J domain; the sequence is DFYEVLGVGR…DKKAAYDQFG (66 aa). A CR-type zinc finger spans residues 132–210; the sequence is GLSKELRIPT…CHGEGRVEKS (79 aa). Residues Cys-145, Cys-148, Cys-162, Cys-165, Cys-184, Cys-187, Cys-198, and Cys-201 each contribute to the Zn(2+) site. CXXCXGXG motif repeat units lie at residues 145-152, 162-169, 184-191, and 198-205; these read CEPCDGSG, CGTCHGQG, CPTCHGRG, and CNKCHGEG.

It belongs to the DnaJ family. As to quaternary structure, homodimer. Requires Zn(2+) as cofactor.

It is found in the cytoplasm. Functionally, participates actively in the response to hyperosmotic and heat shock by preventing the aggregation of stress-denatured proteins and by disaggregating proteins, also in an autonomous, DnaK-independent fashion. Unfolded proteins bind initially to DnaJ; upon interaction with the DnaJ-bound protein, DnaK hydrolyzes its bound ATP, resulting in the formation of a stable complex. GrpE releases ADP from DnaK; ATP binding to DnaK triggers the release of the substrate protein, thus completing the reaction cycle. Several rounds of ATP-dependent interactions between DnaJ, DnaK and GrpE are required for fully efficient folding. Also involved, together with DnaK and GrpE, in the DNA replication of plasmids through activation of initiation proteins. In Shewanella piezotolerans (strain WP3 / JCM 13877), this protein is Chaperone protein DnaJ.